A 611-amino-acid polypeptide reads, in one-letter code: Nuclear cap-binding protein subunit 3 (611 aa).

The tract at residues methionine 1–glycine 44 is disordered. Over residues glutamate 20–alanine 31 the composition is skewed to acidic residues. Residues glutamate 108–glycine 169 form an RNA recognition motif (RRM) domain region. The WLDD motif; essential for 7-methylguanosine-containing mRNA cap binding motif lies at tryptophan 137–aspartate 140. Disordered regions lie at residues asparagine 159–leucine 230, glutamate 338–valine 360, arginine 373–tyrosine 393, lysine 423–leucine 568, and arginine 583–serine 611. Over residues lysine 168–serine 179 the composition is skewed to basic and acidic residues. 2 stretches are compositionally biased toward acidic residues: residues aspartate 196–glutamate 218 and glutamate 339–aspartate 358. The span at lysine 423–lysine 439 shows a compositional bias: polar residues. Residues serine 446–glutamine 463 show a composition bias toward basic and acidic residues. Over residues serine 464–lysine 475 the composition is skewed to low complexity. Basic and acidic residues-rich tracts occupy residues serine 501–serine 511 and proline 544–lysine 556. The segment covering glutamate 602 to serine 611 has biased composition (low complexity).

This sequence belongs to the NCBP3 family. Component of an alternative cap-binding complex (CBC) composed of NCBP1/CBP80 and NCBP3.

Its subcellular location is the nucleus. The protein resides in the cytoplasm. Functionally, associates with NCBP1/CBP80 to form an alternative cap-binding complex (CBC) which plays a key role in mRNA export. NCBP3 serves as adapter protein linking the capped RNAs (m7GpppG-capped RNA) to NCBP1/CBP80. Unlike the conventional CBC with NCBP2 which binds both small nuclear RNA (snRNA) and messenger (mRNA) and is involved in their export from the nucleus, the alternative CBC with NCBP3 does not bind snRNA and associates only with mRNA thereby playing a role in only mRNA export. The protein is Nuclear cap-binding protein subunit 3 of Xenopus tropicalis (Western clawed frog).